Here is a 321-residue protein sequence, read N- to C-terminus: LIMR family protein SELMODRAFT_432210 (321 aa).

The next 5 helical transmembrane spans lie at 28–48 (KQLW…VIPF), 116–133 (CFSL…LDLW), 139–159 (LCVF…FGGV), 240–260 (LVFG…ILVF), and 284–304 (LLGT…VISG).

The protein belongs to the LIMR family.

It is found in the membrane. The protein is LIMR family protein SELMODRAFT_432210 of Selaginella moellendorffii (Spikemoss).